A 445-amino-acid chain; its full sequence is Phosphoglucosamine mutase (445 aa).

The active-site Phosphoserine intermediate is the Ser-101. Ser-101, Asp-240, Asp-242, and Asp-244 together coordinate Mg(2+). Residue Ser-101 is modified to Phosphoserine.

Belongs to the phosphohexose mutase family. The cofactor is Mg(2+). Post-translationally, activated by phosphorylation.

The enzyme catalyses alpha-D-glucosamine 1-phosphate = D-glucosamine 6-phosphate. Functionally, catalyzes the conversion of glucosamine-6-phosphate to glucosamine-1-phosphate. In Azotobacter vinelandii (strain DJ / ATCC BAA-1303), this protein is Phosphoglucosamine mutase.